A 148-amino-acid chain; its full sequence is Small ribosomal subunit protein eS19 (148 aa).

Residues 79-90 show a composition bias toward basic residues; sequence HGSTKNRGSRPA. Disordered stretches follow at residues 79-98 and 116-148; these read HGSTKNRGSRPAHHVDASGA and DEEKGGRRITQSGQRDLDRIAKTTVDEEEEDDE. A compositionally biased stretch (basic and acidic residues) spans 130–140; sequence RDLDRIAKTTV.

The protein belongs to the eukaryotic ribosomal protein eS19 family.

This chain is Small ribosomal subunit protein eS19 (rps19), found in Emericella nidulans (strain FGSC A4 / ATCC 38163 / CBS 112.46 / NRRL 194 / M139) (Aspergillus nidulans).